The primary structure comprises 284 residues: Tropomyosin alpha-1 chain (284 aa).

M1 carries the N-acetylmethionine modification. The tract at residues 1 to 40 (MDAIKKKMQMLKLDKENALDRAEQAESDKKASEDRSKQLE) is disordered. Residues 1-284 (MDAIKKKMQM…DHALNDMTSI (284 aa)) are a coiled coil. Basic and acidic residues predominate over residues 12–40 (KLDKENALDRAEQAESDKKASEDRSKQLE).

Homodimer. Heterodimer of an alpha (TPM1, TPM3 or TPM4) and a beta (TPM2) chain.

It localises to the cytoplasm. The protein localises to the cytoskeleton. Its function is as follows. Binds to actin filaments in muscle and non-muscle cells. Plays a central role, in association with the troponin complex, in the calcium dependent regulation of vertebrate striated muscle contraction. Smooth muscle contraction is regulated by interaction with caldesmon. In non-muscle cells is implicated in stabilizing cytoskeleton actin filaments. This Chelon auratus (Golden grey mullet) protein is Tropomyosin alpha-1 chain.